We begin with the raw amino-acid sequence, 810 residues long: Fibroblast growth factor receptor 1-A (810 aa).

The signal sequence occupies residues 1–26; that stretch reads MKMMMIMKTTLLLISVLLTQALQSQG. The Extracellular segment spans residues 27 to 363; it reads RPAIQDEAPA…TQLPNQTYLE (337 aa). 3 Ig-like C2-type domains span residues 28–115, 147–235, and 244–346; these read PAIQ…FNIS, PDKM…YQLD, and PILQ…AWLT. The cysteines at positions 53 and 99 are disulfide-linked. N-linked (GlcNAc...) asparagine glycosylation is found at Asn107, Asn113, Asn216, Asn229, Asn253, Asn285, Asn306, Asn319, and Asn358. A disulfide bridge links Cys167 with Cys219. Cysteines 266 and 330 form a disulfide. The chain crosses the membrane as a helical span at residues 364-384; sequence VLIYCVGFFLICVMVGTAVLA. Topologically, residues 385-810 are cytoplasmic; it reads KMHSSAKKSD…PNRGVAFKKR (426 aa). Tyr450 bears the Phosphotyrosine; by autocatalysis mark. A Protein kinase domain is found at 465-754; sequence LVLGKPLGEG…LSMTSNQEYL (290 aa). ATP contacts are provided by residues 471–477, Lys501, 549–551, and Asn555; these read LGEGCFG and EFA. Residues Tyr570 and Tyr572 each carry the phosphotyrosine; by autocatalysis modification. The active-site Proton acceptor is Asp610. ATP is bound by residues Arg614 and Asp628. Tyr640, Tyr641, Tyr717, and Tyr753 each carry phosphotyrosine; by autocatalysis. The interval 787 to 810 is disordered; the sequence is AGADEPCLPKFPPHPNRGVAFKKR.

The protein belongs to the protein kinase superfamily. Tyr protein kinase family. Fibroblast growth factor receptor subfamily. Monomer. Homodimer after ligand binding. Interacts with cnpy1. In terms of processing, autophosphorylated. Binding of FGF family members together with heparan sulfate proteoglycan or heparin promotes receptor dimerization and autophosphorylation on tyrosine residues. Autophosphorylation occurs in trans between the two FGFR molecules present in the dimer and proceeds in a highly ordered manner. Phosphotyrosine residues provide docking sites for interacting proteins and so are crucial for FGFR1 function and its regulation. Ubiquitinated. FGFR1 is rapidly ubiquitinated after autophosphorylation, leading to internalization and degradation. Post-translationally, N-glycosylated in the endoplasmic reticulum. The N-glycan chains undergo further maturation to an Endo H-resistant form in the Golgi apparatus. In terms of tissue distribution, initially expressed in adaxial mesoderm with transcripts distinctly localized to the anterior portion of each half-somite. Hereupon, also strongly expressed in the otic vesicles, branchial arches and the brain, especially at the midbrain-hindbrain boundary (MHB).

The protein resides in the cell membrane. It is found in the nucleus. It localises to the cytoplasm. Its subcellular location is the cytosol. The protein localises to the cytoplasmic vesicle. It carries out the reaction L-tyrosyl-[protein] + ATP = O-phospho-L-tyrosyl-[protein] + ADP + H(+). With respect to regulation, present in an inactive conformation in the absence of bound ligand. Ligand binding leads to dimerization and activation by sequential autophosphorylation on tyrosine residues. Functionally, tyrosine-protein kinase that acts as a cell-surface receptor for fibroblast growth factors and plays an essential role in the regulation of embryonic development, cell proliferation, differentiation and migration. Required for normal mesoderm patterning and normal skeletogenesis. Phosphorylates PLCG1, FRS2, GAB1 and SHB. Ligand binding leads to the activation of several signaling cascades. Activation of PLCG1 leads to the production of the cellular signaling molecules diacylglycerol and inositol-1,4,5-trisphosphate. Phosphorylation of FRS2 triggers recruitment of GRB2, GAB1, PIK3R1 and SOS1, and mediates activation of RAS, MAPK1/ERK2, MAPK3/ERK1 and the MAP kinase signaling pathway, as well as of the AKT1 signaling pathway. Promotes phosphorylation of SHC1, STAT1 and PTPN11/SHP2. In the nucleus, enhances RPS6KA1 and CREB1 activity and contributes to the regulation of transcription. FGFR1 signaling is down-regulated by ubiquitination, internalization and degradation. The polypeptide is Fibroblast growth factor receptor 1-A (fgfr1a) (Danio rerio (Zebrafish)).